Consider the following 384-residue polypeptide: D-alanine--D-alanine ligase (384 aa).

The region spanning 167–374 (KKLFAAEGLP…YPTLLATMVD (208 aa)) is the ATP-grasp domain. ATP is bound at residue 195–250 (CERLSLPVFVKPARGGSSIGISRVSSWGQLPSAIAYARRHDPKVIVEAAVNGRELE). Mg(2+)-binding residues include Asp-329, Glu-341, and Asn-343.

It belongs to the D-alanine--D-alanine ligase family. Requires Mg(2+) as cofactor. Mn(2+) serves as cofactor.

It is found in the cytoplasm. The enzyme catalyses 2 D-alanine + ATP = D-alanyl-D-alanine + ADP + phosphate + H(+). It participates in cell wall biogenesis; peptidoglycan biosynthesis. Functionally, cell wall formation. The protein is D-alanine--D-alanine ligase of Mycobacterium leprae (strain TN).